The sequence spans 122 residues: Large ribosomal subunit protein uL14c (122 aa).

The protein belongs to the universal ribosomal protein uL14 family. In terms of assembly, part of the 50S ribosomal subunit.

Its subcellular location is the plastid. The protein localises to the chloroplast. Functionally, binds to 23S rRNA. This Citrus sinensis (Sweet orange) protein is Large ribosomal subunit protein uL14c.